The primary structure comprises 161 residues: uncharacterized protein (161 aa).

Disordered regions lie at residues 47–83 (KPAKRNIHGHNNHTRSSNHPHSGAHSNINHNNNNNIN) and 104–137 (RRLQQNGGGGDSSSSRSSNNNNSTNDNKPQSKNY). Over residues 50 to 64 (KRNIHGHNNHTRSSN) the composition is skewed to basic residues. 2 stretches are compositionally biased toward low complexity: residues 73–83 (NINHNNNNNIN) and 115–130 (SSSSRSSNNNNSTNDN).

This is an uncharacterized protein from Dictyostelium discoideum (Social amoeba).